The following is a 148-amino-acid chain: Large ribosomal subunit protein bL9 (148 aa).

It belongs to the bacterial ribosomal protein bL9 family.

Functionally, binds to the 23S rRNA. The chain is Large ribosomal subunit protein bL9 from Syntrophobacter fumaroxidans (strain DSM 10017 / MPOB).